Here is an 80-residue protein sequence, read N- to C-terminus: Translation initiation factor IF-1, chloroplastic (80 aa).

Residues 1–74 enclose the S1-like domain; the sequence is MKEQKWIHEG…TRGRIIYRLR (74 aa).

This sequence belongs to the IF-1 family. Component of the 30S ribosomal translation pre-initiation complex which assembles on the 30S ribosome in the order IF-2 and IF-3, IF-1 and N-formylmethionyl-tRNA(fMet); mRNA recruitment can occur at any time during PIC assembly.

It localises to the plastid. It is found in the chloroplast. In terms of biological role, one of the essential components for the initiation of protein synthesis. Stabilizes the binding of IF-2 and IF-3 on the 30S subunit to which N-formylmethionyl-tRNA(fMet) subsequently binds. Helps modulate mRNA selection, yielding the 30S pre-initiation complex (PIC). Upon addition of the 50S ribosomal subunit IF-1, IF-2 and IF-3 are released leaving the mature 70S translation initiation complex. The sequence is that of Translation initiation factor IF-1, chloroplastic from Illicium parviflorum (Yellow anise tree).